We begin with the raw amino-acid sequence, 484 residues long: Probable efflux pump outer membrane protein TtgC (484 aa).

A signal peptide spans 1–17; that stretch reads MTKSLLSLAVTAFILGG. A lipid anchor (N-palmitoyl cysteine) is attached at Cys18. A lipid anchor (S-diacylglycerol cysteine) is attached at Cys18.

It belongs to the outer membrane factor (OMF) (TC 1.B.17) family.

The protein localises to the cell outer membrane. Probable outer membrane component of the TtgABC efflux pump with unknown specificity. The polypeptide is Probable efflux pump outer membrane protein TtgC (ttgC) (Pseudomonas putida (strain ATCC 47054 / DSM 6125 / CFBP 8728 / NCIMB 11950 / KT2440)).